We begin with the raw amino-acid sequence, 934 residues long: Rab GTPase-activating protein tbc-11 (934 aa).

The region spanning 16-134 is the PID domain; sequence VQYLGCSQLV…SKAETAAKAL (119 aa). A disordered region spans residues 337–383; that stretch reads FISLESDSDRKRSKQNLGKSPSRMPTQLLHPTGDDESDCDEPLLSGS. Residues 351–361 show a composition bias toward polar residues; that stretch reads QNLGKSPSRMP. The Rab-GAP TBC domain occupies 422–612; that stretch reads GIPDKLRGRV…FILDLFLSQG (191 aa). 2 coiled-coil regions span residues 727 to 800 and 861 to 895; these read KIEL…YKKL and LEEREDHIKNLEIDLAQTKLSLVEAECRNQDLTHQ.

Rab GTPase activating protein for the small GTPases rab-6.1 and rab-6.2. Probably acts through rab-6.1 and rab-6.2 to play a role in microRNA-mediated gene silencing in different tissue types. Required for seam cell division and alae formation. The protein is Rab GTPase-activating protein tbc-11 of Caenorhabditis elegans.